The following is a 542-amino-acid chain: Chaperonin GroEL 1 (542 aa).

ATP contacts are provided by residues 29 to 32, 86 to 90, glycine 415, 479 to 481, and aspartate 495; these read TIGP, DGTTT, and NAA.

This sequence belongs to the chaperonin (HSP60) family. As to quaternary structure, forms a cylinder of 14 subunits composed of two heptameric rings stacked back-to-back. Interacts with the co-chaperonin GroES.

The protein resides in the cytoplasm. It carries out the reaction ATP + H2O + a folded polypeptide = ADP + phosphate + an unfolded polypeptide.. Together with its co-chaperonin GroES, plays an essential role in assisting protein folding. The GroEL-GroES system forms a nano-cage that allows encapsulation of the non-native substrate proteins and provides a physical environment optimized to promote and accelerate protein folding. This is Chaperonin GroEL 1 from Streptomyces avermitilis (strain ATCC 31267 / DSM 46492 / JCM 5070 / NBRC 14893 / NCIMB 12804 / NRRL 8165 / MA-4680).